The primary structure comprises 115 residues: Probable prefoldin subunit 1 (115 aa).

This sequence belongs to the prefoldin subunit beta family. Heterohexamer of two PFD-alpha type and four PFD-beta type subunits.

Its function is as follows. Binds specifically to cytosolic chaperonin (c-CPN) and transfers target proteins to it. Binds to nascent polypeptide chain and promotes folding in an environment in which there are many competing pathways for nonnative proteins. In Dictyostelium discoideum (Social amoeba), this protein is Probable prefoldin subunit 1 (pfdn1).